Consider the following 167-residue polypeptide: Methyl-coenzyme M reductase II operon protein D (167 aa).

In terms of assembly, MCR is composed of three subunits: alpha, beta, and gamma. The function of protein D is not known.

The sequence is that of Methyl-coenzyme M reductase II operon protein D (mrtD) from Methanocaldococcus jannaschii (strain ATCC 43067 / DSM 2661 / JAL-1 / JCM 10045 / NBRC 100440) (Methanococcus jannaschii).